We begin with the raw amino-acid sequence, 59 residues long: U-myrmeciitoxin(01)-Mg5b (59 aa).

An N-terminal signal peptide occupies residues 1–21 (MRLSYLSLALAIIFVLTIMHA). The propeptide occupies 22–38 (SNVEAKASADPEPDAVG).

As to expression, expressed by the venom gland.

Its subcellular location is the secreted. In terms of biological role, may have antimicrobial properties, like most ant linear peptides. The polypeptide is U-myrmeciitoxin(01)-Mg5b (Myrmecia gulosa (Red bulldog ant)).